We begin with the raw amino-acid sequence, 182 residues long: Flagellar transcriptional regulator FlhC (182 aa).

Zn(2+) contacts are provided by cysteine 138, cysteine 141, cysteine 158, and cysteine 161.

The protein belongs to the FlhC family. In terms of assembly, heterohexamer composed of two FlhC and four FlhD subunits. Each FlhC binds a FlhD dimer, forming a heterotrimer, and a hexamer assembles by dimerization of two heterotrimers. The cofactor is Zn(2+).

It is found in the cytoplasm. Its function is as follows. Functions in complex with FlhD as a master transcriptional regulator that regulates transcription of several flagellar and non-flagellar operons by binding to their promoter region. Activates expression of class 2 flagellar genes, including fliA, which is a flagellum-specific sigma factor that turns on the class 3 genes. Also regulates genes whose products function in a variety of physiological pathways. This Gallionella capsiferriformans (strain ES-2) (Gallionella ferruginea capsiferriformans (strain ES-2)) protein is Flagellar transcriptional regulator FlhC.